A 472-amino-acid chain; its full sequence is Poly(A) polymerase catalytic subunit (472 aa).

Active-site residues include Asp194 and Asp196.

The protein belongs to the poxviridae poly(A) polymerase catalytic subunit family. In terms of assembly, heterodimer of a large (catalytic) subunit and a small (regulatory) subunit.

It catalyses the reaction RNA(n) + ATP = RNA(n)-3'-adenine ribonucleotide + diphosphate. Polymerase that creates the 3'-poly(A) tail of mRNA's. In Fowlpox virus (strain NVSL) (FPV), this protein is Poly(A) polymerase catalytic subunit (PAPL).